Reading from the N-terminus, the 349-residue chain is Green-sensitive opsin-1 (349 aa).

The Extracellular portion of the chain corresponds to 1–36; the sequence is MNGTEGSNFYIPMSNRTGLVRSPYDYTQYYLAEPWK. N-linked (GlcNAc...) asparagine glycans are attached at residues asparagine 2 and asparagine 15. A helical membrane pass occupies residues 37–61; the sequence is FKALAFYMFLLIIFGFPINVLTLVV. Residues 62-73 lie on the Cytoplasmic side of the membrane; it reads TAQHKKLRQPLN. Residues 74–99 traverse the membrane as a helical segment; the sequence is YILVNLAFAGTIMVIFGFTVSFYCSL. Over 100–113 the chain is Extracellular; it reads VGYMALGPLGCVME. Cysteine 110 and cysteine 187 are joined by a disulfide. Residues 114-133 traverse the membrane as a helical segment; the sequence is GFFATLGGQVALWSLVVLAI. Residues 134 to 152 are Cytoplasmic-facing; it reads ERYIVVCKPMGSFKFSANH. Residues 153-176 traverse the membrane as a helical segment; sequence AMAGIAFTWFMACSCAVPPLFGWS. At 177-202 the chain is on the extracellular side; sequence RYLPEGMQTSCGPDYYTLNPEYNNES. N-linked (GlcNAc...) asparagine glycosylation occurs at asparagine 200. A helical membrane pass occupies residues 203–230; sequence YVMYMFSCHFCIPVTTIFFTYGSLVCTV. The Cytoplasmic segment spans residues 231-252; it reads KAAAAQQQESESTQKAEREVTR. A helical membrane pass occupies residues 253-276; sequence MVILMVLGFLFAWVPYASFAAWIF. Over 277–284 the chain is Extracellular; the sequence is FNRGAAFS. The helical transmembrane segment at 285–309 threads the bilayer; sequence AQAMAVPAFFSKTSAVFNPIIYVLL. Lysine 296 carries the post-translational modification N6-(retinylidene)lysine. Topologically, residues 310-349 are cytoplasmic; it reads NKQFRSCMLNTLFCGKSPLGDDESSSVSTSKTEVSSVSPA. Residues 328 to 349 form a disordered region; that stretch reads LGDDESSSVSTSKTEVSSVSPA. Residues 334–349 show a composition bias toward low complexity; the sequence is SSVSTSKTEVSSVSPA.

The protein belongs to the G-protein coupled receptor 1 family. Opsin subfamily. In terms of processing, phosphorylated on some or all of the serine and threonine residues present in the C-terminal region. As to expression, retinal double cone accessory photoreceptor cell outer segments.

Its subcellular location is the membrane. Visual pigments are the light-absorbing molecules that mediate vision. They consist of an apoprotein, opsin, covalently linked to cis-retinal. The chain is Green-sensitive opsin-1 (opn1mw1) from Danio rerio (Zebrafish).